Consider the following 306-residue polypeptide: Pre-mRNA-splicing factor cwf26 (306 aa).

Residues 130 to 152 (KAEERRKREEKSSNLDEEELRKS) form a disordered region. A coiled-coil region spans residues 130–198 (KAEERRKREE…KEQQQGVVQV (69 aa)).

Belongs to the CWC26 family. Belongs to the 40S cdc5-associated complex (or cwf complex), a spliceosome sub-complex reminiscent of a late-stage spliceosome composed of the U2, U5 and U6 snRNAs and at least brr2, cdc5, cwf2/prp3, cwf3/syf1, cwf4/syf3, cwf5/ecm2, spp42/cwf6, cwf7/spf27, cwf8, cwf9, cwf10, cwf11, cwf12, prp45/cwf13, cwf14, cwf15, cwf16, cwf17, cwf18, cwf19, cwf20, cwf21, cwf22, cwf23, cwf24, cwf25, cwf26, cyp7/cwf27, cwf28, cwf29/ist3, lea1, msl1, prp5/cwf1, prp10, prp12/sap130, prp17, prp22, sap61, sap62, sap114, sap145, slu7, smb1, smd1, smd3, smf1, smg1 and syf2.

Its subcellular location is the cytoplasm. The protein resides in the nucleus. Involved in mRNA splicing. This Schizosaccharomyces pombe (strain 972 / ATCC 24843) (Fission yeast) protein is Pre-mRNA-splicing factor cwf26 (cwf26).